Reading from the N-terminus, the 763-residue chain is 5-methyltetrahydropteroyltriglutamate--homocysteine methyltransferase (763 aa).

5-methyltetrahydropteroyltri-L-glutamate contacts are provided by residues arginine 16–lysine 19 and lysine 117. L-homocysteine-binding positions include isoleucine 440–serine 442 and glutamate 493. L-methionine is bound by residues isoleucine 440–serine 442 and glutamate 493. 5-methyltetrahydropteroyltri-L-glutamate-binding positions include arginine 524–cysteine 525 and tryptophan 570. Aspartate 608 is a binding site for L-homocysteine. Aspartate 608 is a binding site for L-methionine. Glutamate 614 provides a ligand contact to 5-methyltetrahydropteroyltri-L-glutamate. Zn(2+) is bound by residues histidine 650, cysteine 652, and glutamate 674. Residue histidine 703 is the Proton donor of the active site. Residue cysteine 735 participates in Zn(2+) binding.

It belongs to the vitamin-B12 independent methionine synthase family. Zn(2+) is required as a cofactor.

It carries out the reaction 5-methyltetrahydropteroyltri-L-glutamate + L-homocysteine = tetrahydropteroyltri-L-glutamate + L-methionine. It functions in the pathway amino-acid biosynthesis; L-methionine biosynthesis via de novo pathway; L-methionine from L-homocysteine (MetE route): step 1/1. Catalyzes the transfer of a methyl group from 5-methyltetrahydrofolate to homocysteine resulting in methionine formation. This chain is 5-methyltetrahydropteroyltriglutamate--homocysteine methyltransferase, found in Alcanivorax borkumensis (strain ATCC 700651 / DSM 11573 / NCIMB 13689 / SK2).